Reading from the N-terminus, the 45-residue chain is Mu-conotoxin-like Cal 12.1.2g (45 aa).

Cystine bridges form between cysteine 3–cysteine 16, cysteine 11–cysteine 28, cysteine 18–cysteine 33, and cysteine 27–cysteine 39. The residue at position 23 (proline 23) is a 4-hydroxyproline. 2 positions are modified to 6'-bromotryptophan: tryptophan 37 and tryptophan 38. 4-hydroxyproline is present on proline 40.

As to expression, expressed by the venom duct.

The protein resides in the secreted. Mu-conotoxins block voltage-gated sodium channels. This toxin reversibly blocks voltage-gated sodium channel in cephalopods, with no alteration in the voltage dependence of sodium conductance or on the kinetics of inactivation. This Californiconus californicus (California cone) protein is Mu-conotoxin-like Cal 12.1.2g.